We begin with the raw amino-acid sequence, 210 residues long: Homeobox protein Rhox5 (210 aa).

Positions 1–119 are disordered; the sequence is MEAEGSSRKV…GNPGGRQMPL (119 aa). Residues 17 to 30 are compositionally biased toward basic and acidic residues; sequence GVKEDSEEQHDVKA. A compositionally biased stretch (gly residues) spans 47 to 79; that stretch reads GQPGVGAVGTEGEGEELNGGKGHFGPGAPGPMG. Positions 117–175 form a DNA-binding region, homeobox; atypical; the sequence is MPLQGSRFAQHRLRELESILQRTNSFDVPREDLDRLMDACVSRVQNWFKIRRAAARRTR.

The protein resides in the nucleus. Its function is as follows. Transcription factor required for differentiation of embryonic stem cells (ESCs) into primordial germ cells. The protein is Homeobox protein Rhox5 (Rhox5) of Mus musculus (Mouse).